The sequence spans 92 residues: UPF0250 protein XAC0666 (92 aa).

The protein belongs to the UPF0250 family.

This chain is UPF0250 protein XAC0666, found in Xanthomonas axonopodis pv. citri (strain 306).